A 478-amino-acid polypeptide reads, in one-letter code: Noelin-3 (478 aa).

Residues 1-23 (MSAPLLKLGAVLSTMAMISNWMS) form the signal peptide. N-linked (GlcNAc...) asparagine glycosylation is found at Asn33, Asn95, Asn179, Asn299, and Asn465. Residues 77 to 217 (CSRDAKSRQL…TRLRDCMKKL (141 aa)) are a coiled coil. Positions 218-470 (TCGKLMKITG…QVLFNVTLFH (253 aa)) constitute an Olfactomedin-like domain. A disulfide bridge links Cys219 with Cys401.

In terms of assembly, peripherally associated with AMPAR complex. AMPAR complex consists of an inner core made of 4 pore-forming GluA/GRIA proteins (GRIA1, GRIA2, GRIA3 and GRIA4) and 4 major auxiliary subunits arranged in a twofold symmetry. One of the two pairs of distinct binding sites is occupied either by CNIH2, CNIH3 or CACNG2, CACNG3. The other harbors CACNG2, CACNG3, CACNG4, CACNG8 or GSG1L. This inner core of AMPAR complex is complemented by outer core constituents binding directly to the GluA/GRIA proteins at sites distinct from the interaction sites of the inner core constituents. Outer core constituents include at least PRRT1, PRRT2, CKAMP44/SHISA9, FRRS1L and NRN1. The proteins of the inner and outer core serve as a platform for other, more peripherally associated AMPAR constituents, including OLFM3. Alone or in combination, these auxiliary subunits control the gating and pharmacology of the AMPAR complex and profoundly impact their biogenesis and protein processing. Homodimer. Interacts with MYOC. Interacts with OLFM2. In terms of tissue distribution, expressed in the brain (at protein level). Also expressed in the retina, mainly in the ganglion cell layer and in the amacrine cell subregion of the inner nuclear layer. Expressed at high levels in the epithelial cells of the posterior iris and the ciliary body and, at lower levels, in the trabecular meshwork. Isoform 2 preferentially expressed in retina and brain, while isoform 1 preferentially expressed in the tissues of the eye angle.

It localises to the secreted. It is found in the synapse. This Rattus norvegicus (Rat) protein is Noelin-3 (Olfm3).